A 200-amino-acid polypeptide reads, in one-letter code: Pyridoxal 5'-phosphate synthase subunit PdxT (200 aa).

An L-glutamine-binding site is contributed by Gly52 to Ser54. Catalysis depends on Cys84, which acts as the Nucleophile. Residues Arg116 and Ile145–Arg146 contribute to the L-glutamine site. Residues His181 and Glu183 each act as charge relay system in the active site.

Belongs to the glutaminase PdxT/SNO family. In the presence of PdxS, forms a dodecamer of heterodimers. Only shows activity in the heterodimer.

The catalysed reaction is aldehydo-D-ribose 5-phosphate + D-glyceraldehyde 3-phosphate + L-glutamine = pyridoxal 5'-phosphate + L-glutamate + phosphate + 3 H2O + H(+). It carries out the reaction L-glutamine + H2O = L-glutamate + NH4(+). Its pathway is cofactor biosynthesis; pyridoxal 5'-phosphate biosynthesis. In terms of biological role, catalyzes the hydrolysis of glutamine to glutamate and ammonia as part of the biosynthesis of pyridoxal 5'-phosphate. The resulting ammonia molecule is channeled to the active site of PdxS. This Saccharolobus islandicus (strain M.16.27) (Sulfolobus islandicus) protein is Pyridoxal 5'-phosphate synthase subunit PdxT.